Reading from the N-terminus, the 411-residue chain is Na(+)-translocating NADH-quinone reductase subunit B (411 aa).

Helical transmembrane passes span 56–76, 120–140, and 166–186; these read MMIT…YNVG, ALGA…CTIW, and IVPP…GIIV. Residue T233 is modified to FMN phosphoryl threonine. The next 5 membrane-spanning stretches (helical) occupy residues 272–292, 294–314, 319–339, 348–368, and 378–398; these read VSTL…IAAW, IIAG…LIGS, MFSM…GMVF, SFTN…AVLI, and GMML…YIVV.

The protein belongs to the NqrB/RnfD family. Composed of six subunits; NqrA, NqrB, NqrC, NqrD, NqrE and NqrF. FMN serves as cofactor.

The protein resides in the cell inner membrane. The catalysed reaction is a ubiquinone + n Na(+)(in) + NADH + H(+) = a ubiquinol + n Na(+)(out) + NAD(+). In terms of biological role, NQR complex catalyzes the reduction of ubiquinone-1 to ubiquinol by two successive reactions, coupled with the transport of Na(+) ions from the cytoplasm to the periplasm. NqrA to NqrE are probably involved in the second step, the conversion of ubisemiquinone to ubiquinol. This chain is Na(+)-translocating NADH-quinone reductase subunit B, found in Haemophilus influenzae (strain 86-028NP).